The sequence spans 205 residues: Isochorismatase domain-containing protein 2 (205 aa).

Phosphoserine occurs at positions 7 and 202.

Belongs to the isochorismatase family. In terms of assembly, interacts with CDKN2A.

It is found in the cytoplasm. Its subcellular location is the nucleus. In Pongo abelii (Sumatran orangutan), this protein is Isochorismatase domain-containing protein 2 (ISOC2).